Here is a 1456-residue protein sequence, read N- to C-terminus: Macrophage mannose receptor 1 (1456 aa).

The N-terminal stretch at 1–18 (MRLPLLLVFASVIPGAVL) is a signal peptide. At 19–1389 (LLDTRQFLIY…DPSKPSSNVA (1371 aa)) the chain is on the extracellular side. A Ricin B-type lectin domain is found at 22–142 (TRQFLIYNED…SGLWSRWKIY (121 aa)). Disulfide bonds link Cys-35–Cys-49 and Cys-74–Cys-91. Residue Asn-104 is glycosylated (N-linked (GlcNAc...) asparagine). In terms of domain architecture, Fibronectin type-II spans 163–211 (ANGATCAFPFKFENKWYADCTSAGRSDGWLWCGTTTDYDTDKLFGYCPL). 4 disulfide bridges follow: Cys-168–Cys-194, Cys-182–Cys-209, Cys-247–Cys-340, and Cys-316–Cys-332. Residues 225 to 341 (LTSVSYQINS…CVQKLGYICK (117 aa)) enclose the C-type lectin 1 domain. Residue Asn-344 is glycosylated (N-linked (GlcNAc...) asparagine). 4 C-type lectin domains span residues 369–487 (YAGH…YICK), 511–626 (HHFY…FVCK), 655–778 (RTSL…WICQ), and 807–923 (YKDY…FICQ). Disulfide bonds link Cys-391/Cys-486 and Cys-463/Cys-478. A glycan (N-linked (GlcNAc...) asparagine) is linked at Asn-529. 7 disulfide bridges follow: Cys-532–Cys-625, Cys-600–Cys-617, Cys-646–Cys-659, Cys-680–Cys-777, Cys-753–Cys-769, Cys-828–Cys-922, and Cys-899–Cys-914. N-linked (GlcNAc...) asparagine glycans are attached at residues Asn-926 and Asn-930. 3 C-type lectin domains span residues 952-1080 (YSNK…YICQ), 1102-1213 (YGKS…FLCK), and 1241-1356 (FHGH…YICK). 6 disulfide bridges follow: Cys-977–Cys-1079, Cys-1052–Cys-1071, Cys-1123–Cys-1212, Cys-1190–Cys-1204, Cys-1263–Cys-1355, and Cys-1332–Cys-1347. Asn-1160 carries N-linked (GlcNAc...) asparagine glycosylation. N-linked (GlcNAc...) asparagine glycosylation occurs at Asn-1205. A helical membrane pass occupies residues 1390 to 1410 (GVVIIVILLILTGAGLAAYFF). The Cytoplasmic portion of the chain corresponds to 1411 to 1456 (YKKRRVHLPQEGAFENTLYFNSQSSPGTSDMKDLVGNIEQNEHSVI).

As to quaternary structure, (Microbial infection) Interacts with Dengue virus. (Microbial infection) May act as a receptor for hepatitis B virus, enabling uptake of the virus in hepatic dendritic cells.

The protein resides in the endosome membrane. Its subcellular location is the cell membrane. Mediates the endocytosis of glycoproteins by macrophages. Binds both sulfated and non-sulfated polysaccharide chains. In terms of biological role, (Microbial infection) Acts as a phagocytic receptor for bacteria, fungi and other pathogens. Functionally, (Microbial infection) Acts as a receptor for Dengue virus envelope protein E. Its function is as follows. (Microbial infection) Interacts with Hepatitis B virus envelope protein. This Homo sapiens (Human) protein is Macrophage mannose receptor 1 (MRC1).